A 434-amino-acid chain; its full sequence is Methylenetetrahydrofolate--tRNA-(uracil-5-)-methyltransferase TrmFO (434 aa).

Position 10 to 15 (10 to 15 (GAGLAG)) interacts with FAD.

The protein belongs to the MnmG family. TrmFO subfamily. Requires FAD as cofactor.

The protein resides in the cytoplasm. It carries out the reaction uridine(54) in tRNA + (6R)-5,10-methylene-5,6,7,8-tetrahydrofolate + NADH + H(+) = 5-methyluridine(54) in tRNA + (6S)-5,6,7,8-tetrahydrofolate + NAD(+). The enzyme catalyses uridine(54) in tRNA + (6R)-5,10-methylene-5,6,7,8-tetrahydrofolate + NADPH + H(+) = 5-methyluridine(54) in tRNA + (6S)-5,6,7,8-tetrahydrofolate + NADP(+). Catalyzes the folate-dependent formation of 5-methyl-uridine at position 54 (M-5-U54) in all tRNAs. This Bacillus cytotoxicus (strain DSM 22905 / CIP 110041 / 391-98 / NVH 391-98) protein is Methylenetetrahydrofolate--tRNA-(uracil-5-)-methyltransferase TrmFO.